The primary structure comprises 133 residues: Small ribosomal subunit protein uS8 (133 aa).

The protein belongs to the universal ribosomal protein uS8 family. As to quaternary structure, part of the 30S ribosomal subunit. Contacts proteins S5 and S12.

One of the primary rRNA binding proteins, it binds directly to 16S rRNA central domain where it helps coordinate assembly of the platform of the 30S subunit. The chain is Small ribosomal subunit protein uS8 from Prochlorococcus marinus (strain AS9601).